We begin with the raw amino-acid sequence, 132 residues long: D-ribose pyranase (132 aa).

The active-site Proton donor is the His20. Residues Asp28, His99, and Tyr121–Asn123 each bind substrate.

It belongs to the RbsD / FucU family. RbsD subfamily. As to quaternary structure, homodecamer.

Its subcellular location is the cytoplasm. The enzyme catalyses beta-D-ribopyranose = beta-D-ribofuranose. It functions in the pathway carbohydrate metabolism; D-ribose degradation; D-ribose 5-phosphate from beta-D-ribopyranose: step 1/2. Catalyzes the interconversion of beta-pyran and beta-furan forms of D-ribose. This is D-ribose pyranase from Variovorax paradoxus (strain S110).